The chain runs to 110 residues: Endoribonuclease SymE (110 aa).

Residues 29–74 enclose the SpoVT-AbrB domain; it reads SSYPEYTRIPAITLKGQWLEDAGFTTGTQVDVRVMNGCIVLTAQQP.

Belongs to the SymE family.

The protein resides in the cytoplasm. Involved in the degradation and recycling of damaged RNA. It is itself a target for degradation by the ATP-dependent protease Lon. The polypeptide is Endoribonuclease SymE (Salmonella choleraesuis (strain SC-B67)).